A 117-amino-acid polypeptide reads, in one-letter code: MTRIRRGYIARRRRTKIRLFTSSFRGAHSRLTRTIIQQRIKALFSAYRDRDRHKRNFRCLWVTRINAAIRENAVSYSYSTLINNLYKRQLLLNRKILAQLAILNRNCLYLISNDMIK.

Belongs to the bacterial ribosomal protein bL20 family.

It localises to the plastid. The protein resides in the chloroplast. Binds directly to 23S ribosomal RNA and is necessary for the in vitro assembly process of the 50S ribosomal subunit. It is not involved in the protein synthesizing functions of that subunit. In Populus alba (White poplar), this protein is Large ribosomal subunit protein bL20c.